The sequence spans 192 residues: UPF0316 protein SSP0880 (192 aa).

3 helical membrane passes run 8 to 28, 40 to 60, and 66 to 86; these read PWLMVLAIFIINVAYVTCLTM, VAAIVSFLEVLVYVVGLGMVM, and IQNVFAYAFGFSIGIIVGMKI.

This sequence belongs to the UPF0316 family.

It is found in the cell membrane. This is UPF0316 protein SSP0880 from Staphylococcus saprophyticus subsp. saprophyticus (strain ATCC 15305 / DSM 20229 / NCIMB 8711 / NCTC 7292 / S-41).